Reading from the N-terminus, the 1236-residue chain is ABC transporter B family member 9 (1236 aa).

The ABC transmembrane type-1 1 domain occupies 33–320; sequence MTVGTIAAAG…TSPSLNAFAA (288 aa). Transmembrane regions (helical) follow at residues 38–58, 80–100, 158–178, 179–199, 257–277, and 288–308; these read IAAAGNGLTQPFMTLIFGQLI, FIYLAVYSCVVAFLQVSCWMV, QLLCTFLGGFAIAFYKGPLLA, GVLCSCIPLIVIAGAAMSLIM, ISGFGLGTMLAVIFCSYGLAV, and GYNGGQVINVIFAVLTGGMSL. The 237-residue stretch at 355–591 folds into the ABC transporter 1 domain; the sequence is IELKDVYFRY…PEGAYSQLVR (237 aa). 390-397 is an ATP binding site; the sequence is GQSGSGKS. An N-linked (GlcNAc...) asparagine glycan is attached at Asn-542. The tract at residues 593–616 is disordered; sequence QEGSKEEATESERPETSLDVERSG. Residues 594 to 616 show a composition bias toward basic and acidic residues; the sequence is EGSKEEATESERPETSLDVERSG. N-linked (GlcNAc...) asparagine glycosylation is found at Asn-631 and Asn-653. The next 6 helical transmembrane spans lie at 685–705, 725–745, 785–805, 806–826, 902–922, and 927–947; these read VLVLGSIAAMVHGTVFPIFGL, SHFWALIYIALGLTNFVMIPV, SLVGDALALIVQNIATVTTGL, IIAFTANWILALIVLALSPFI, FSFFFLYCINCVCFVSGAGLI, and ATFGEVFKVFFALTIMAIGVS. Residues 686-958 enclose the ABC transmembrane type-1 2 domain; the sequence is LVLGSIAAMV…TSAMAPDSNK (273 aa). The ABC transporter 2 domain maps to 993-1230; sequence IEFRHVSFRY…SGGAYASLVT (238 aa). ATP is bound at residue 1028–1035; it reads GESGSGKS. Residues Asn-1082 and Asn-1181 are each glycosylated (N-linked (GlcNAc...) asparagine).

The protein belongs to the ABC transporter superfamily. ABCB family. Multidrug resistance exporter (TC 3.A.1.201) subfamily.

It is found in the membrane. In Arabidopsis thaliana (Mouse-ear cress), this protein is ABC transporter B family member 9 (ABCB9).